Consider the following 252-residue polypeptide: Triosephosphate isomerase (252 aa).

10–12 (NWK) serves as a coordination point for substrate. The active-site Electrophile is the His-96. Catalysis depends on Glu-168, which acts as the Proton acceptor. Residues Gly-174, Ser-214, and 235-236 (GG) contribute to the substrate site.

It belongs to the triosephosphate isomerase family. As to quaternary structure, homodimer.

Its subcellular location is the cytoplasm. The catalysed reaction is D-glyceraldehyde 3-phosphate = dihydroxyacetone phosphate. It participates in carbohydrate biosynthesis; gluconeogenesis. It functions in the pathway carbohydrate degradation; glycolysis; D-glyceraldehyde 3-phosphate from glycerone phosphate: step 1/1. In terms of biological role, involved in the gluconeogenesis. Catalyzes stereospecifically the conversion of dihydroxyacetone phosphate (DHAP) to D-glyceraldehyde-3-phosphate (G3P). The protein is Triosephosphate isomerase of Lactococcus lactis subsp. lactis (strain IL1403) (Streptococcus lactis).